A 182-amino-acid polypeptide reads, in one-letter code: Isopentenyl-diphosphate Delta-isomerase (182 aa).

Mn(2+)-binding residues include histidine 25 and histidine 32. The Nudix hydrolase domain maps to 30-164 (LLHLAFSSWL…PWAFSPWMVM (135 aa)). The active site involves cysteine 67. Position 67 (cysteine 67) interacts with Mg(2+). Residue histidine 69 coordinates Mn(2+). Mg(2+) is bound at residue glutamate 87. 2 residues coordinate Mn(2+): glutamate 114 and glutamate 116. Glutamate 116 is a catalytic residue.

Belongs to the IPP isomerase type 1 family. As to quaternary structure, homodimer. The cofactor is Mg(2+). Mn(2+) serves as cofactor.

It localises to the cytoplasm. The catalysed reaction is isopentenyl diphosphate = dimethylallyl diphosphate. It participates in isoprenoid biosynthesis; dimethylallyl diphosphate biosynthesis; dimethylallyl diphosphate from isopentenyl diphosphate: step 1/1. Its function is as follows. Catalyzes the 1,3-allylic rearrangement of the homoallylic substrate isopentenyl (IPP) to its highly electrophilic allylic isomer, dimethylallyl diphosphate (DMAPP). This is Isopentenyl-diphosphate Delta-isomerase from Escherichia coli O6:H1 (strain CFT073 / ATCC 700928 / UPEC).